The following is a 453-amino-acid chain: Gastrin/cholecystokinin type B receptor (453 aa).

The Extracellular segment spans residues 1–57 (MDLLKLNRSLQGPGPGSGSSLCRPGVSLLNSSSAGNLSCETPRIRGTGTRELELTIR). N-linked (GlcNAc...) asparagine glycans are attached at residues N7, N30, and N36. Residues 58-79 (ITLYAVIFLMSVGGNVLIIVVL) traverse the membrane as a helical segment. At 80 to 87 (GLSRRLRT) the chain is on the cytoplasmic side. Residues 88–109 (VTNAFLLSLAVSDLLLAVACMP) form a helical membrane-spanning segment. Residues 110–131 (FTLLPNLMGTFIFGTVICKAVS) are Extracellular-facing. A disulfide bond links C127 and C205. The helical transmembrane segment at 132–150 (YLMGVSVSVSTLNLAAIAL) threads the bilayer. The Cytoplasmic segment spans residues 151-170 (ERYSAICRPLQARVWQTRSH). A helical transmembrane segment spans residues 171–189 (AARVILATWLLSGLLMVPY). Topologically, residues 190-219 (PVYTVVQPVGPRILQCMHLWPSERVQQMWS) are extracellular. A helical transmembrane segment spans residues 220–242 (VLLLILLFFIPGVVMAVAYGLIS). The Cytoplasmic portion of the chain corresponds to 243-339 (RELYLGLRFD…KLLAKKRVVR (97 aa)). Residues 257 to 276 (SETQSRVRNQGGLPGGAAAP) are disordered. The helical transmembrane segment at 340-361 (MLLVIVLLFFVCWLPVYSANTW) threads the bilayer. At 362-379 (RAFDGPGARRALAGAPIS) the chain is on the extracellular side. A helical membrane pass occupies residues 380-400 (FIHLLSYTSACANPLVYCFMH). The Cytoplasmic segment spans residues 401–453 (RRFRQACLDTCARCCPRPPRARPRPLPDEDPPTPSIASLSRLSYTTISTLGPG). Residue C414 is the site of S-palmitoyl cysteine attachment.

Belongs to the G-protein coupled receptor 1 family.

Its subcellular location is the cell membrane. Functionally, receptor for gastrin and cholecystokinin. The CCK-B receptors occur throughout the central nervous system where they modulate anxiety, analgesia, arousal, and neuroleptic activity. This receptor mediates its action by association with G proteins that activate a phosphatidylinositol-calcium second messenger system. The sequence is that of Gastrin/cholecystokinin type B receptor (Cckbr) from Mus musculus (Mouse).